The following is a 101-amino-acid chain: Interleukin-8 (101 aa).

The signal sequence occupies residues 1–22 (MTSKLAVALLAAFLLSAALCEA). R27 carries the citrulline modification. Disulfide bonds link C34–C61 and C36–C77.

This sequence belongs to the intercrine alpha (chemokine CxC) family. In terms of assembly, homodimer. Interacts with TNFAIP6 (via Link domain); this interaction interferes with chemokine binding to glycosaminoglycans. Post-translationally, citrullination at Arg-27 prevents proteolysis, and dampens tissue inflammation, it also enhances leukocytosis, possibly through impaired chemokine clearance from the blood circulation.

The protein resides in the secreted. Its function is as follows. Chemotactic factor that mediates inflammatory response by attracting neutrophils, basophils, and T-cells to clear pathogens and protect the host from infection. Also plays an important role in neutrophil activation. Released in response to an inflammatory stimulus, exerts its effect by binding to the G-protein-coupled receptors CXCR1 and CXCR2, primarily found in neutrophils, monocytes and endothelial cells. G-protein heterotrimer (alpha, beta, gamma subunits) constitutively binds to CXCR1/CXCR2 receptor and activation by IL8 leads to beta and gamma subunits release from Galpha (GNAI2 in neutrophils) and activation of several downstream signaling pathways including PI3K and MAPK pathways. The sequence is that of Interleukin-8 (CXCL8) from Ovis aries (Sheep).